The sequence spans 193 residues: Large ribosomal subunit protein uL5 (193 aa).

The protein belongs to the universal ribosomal protein uL5 family. Part of the 50S ribosomal subunit; part of the 5S rRNA/L5/L18/L25 subcomplex. Contacts the 5S rRNA and the P site tRNA. Forms a bridge to the 30S subunit in the 70S ribosome.

Its function is as follows. This is one of the proteins that bind and probably mediate the attachment of the 5S RNA into the large ribosomal subunit, where it forms part of the central protuberance. In the 70S ribosome it contacts protein S13 of the 30S subunit (bridge B1b), connecting the 2 subunits; this bridge is implicated in subunit movement. Contacts the P site tRNA; the 5S rRNA and some of its associated proteins might help stabilize positioning of ribosome-bound tRNAs. This is Large ribosomal subunit protein uL5 from Arthrobacter sp. (strain FB24).